The following is a 280-amino-acid chain: Acyl-[acyl-carrier-protein]--UDP-N-acetylglucosamine O-acyltransferase (280 aa).

Belongs to the transferase hexapeptide repeat family. LpxA subfamily. As to quaternary structure, homotrimer.

The protein localises to the cytoplasm. It catalyses the reaction a (3R)-hydroxyacyl-[ACP] + UDP-N-acetyl-alpha-D-glucosamine = a UDP-3-O-[(3R)-3-hydroxyacyl]-N-acetyl-alpha-D-glucosamine + holo-[ACP]. The protein operates within glycolipid biosynthesis; lipid IV(A) biosynthesis; lipid IV(A) from (3R)-3-hydroxytetradecanoyl-[acyl-carrier-protein] and UDP-N-acetyl-alpha-D-glucosamine: step 1/6. Its function is as follows. Involved in the biosynthesis of lipid A, a phosphorylated glycolipid that anchors the lipopolysaccharide to the outer membrane of the cell. The protein is Acyl-[acyl-carrier-protein]--UDP-N-acetylglucosamine O-acyltransferase of Chlamydia trachomatis serovar A (strain ATCC VR-571B / DSM 19440 / HAR-13).